Consider the following 233-residue polypeptide: Antigenic membrane protein (233 aa).

Positions 1–32 (MQNQKNQKSLVAKVLVLFAAVALMFVGVQVFA) are cleaved as a signal peptide. The chain crosses the membrane as a helical span at residues 206 to 226 (FLTLVAVVVVAAVAGGVFFFV).

Its subcellular location is the cell membrane. The protein is Antigenic membrane protein (amp) of Onion yellows phytoplasma (strain OY-M).